Reading from the N-terminus, the 503-residue chain is Putative aldehyde dehydrogenase-like protein C9E9.09c (503 aa).

247-252 (GSTGVG) lines the NAD(+) pocket. Position 248 is a phosphoserine (Ser-248). The active-site Proton acceptor is Glu-270. The Nucleophile role is filled by Cys-304. Ser-501 is modified (phosphoserine).

This sequence belongs to the aldehyde dehydrogenase family.

In Schizosaccharomyces pombe (strain 972 / ATCC 24843) (Fission yeast), this protein is Putative aldehyde dehydrogenase-like protein C9E9.09c.